Consider the following 214-residue polypeptide: Osteoclast-stimulating factor 1 (214 aa).

The 60-residue stretch at 12 to 71 (GQVKVFRALYTFEPRTPDELYFEEGDILYIADMSDTNWWKGTCKGKTGLIPSNYVAEQAE) folds into the SH3 domain. 3 ANK repeats span residues 72-101 (SIDNPLHEAAKRGNLSWLRECLENRVGVNG), 105-135 (AGSTALYWGCHGGHKDVVDMLLAQPNIELNQ), and 139-168 (LGDTALHAAAWKGYADIVELLLVKGARTDL).

It localises to the cytoplasm. Functionally, induces bone resorption, acting probably through a signaling cascade which results in the secretion of factor(s) enhancing osteoclast formation and activity. This is Osteoclast-stimulating factor 1 (ostf1) from Xenopus laevis (African clawed frog).